A 206-amino-acid chain; its full sequence is Outer-membrane lipoprotein carrier protein (206 aa).

Positions 1 to 20 (MFYLIKKLPKFILFSLYLYA) are cleaved as a signal peptide.

It belongs to the LolA family. Monomer.

The protein localises to the periplasm. Functionally, participates in the translocation of lipoproteins from the inner membrane to the outer membrane. Only forms a complex with a lipoprotein if the residue after the N-terminal Cys is not an aspartate (The Asp acts as a targeting signal to indicate that the lipoprotein should stay in the inner membrane). This chain is Outer-membrane lipoprotein carrier protein, found in Wigglesworthia glossinidia brevipalpis.